Here is a 127-residue protein sequence, read N- to C-terminus: MGFWKLSPFLAIGLLVMYQAGILQAAPFRSALENPLESATLTEDEICVLLTAVVKDYVQMKARELQQEQETEGSSLTAQKSSCKDGPCVTNRLEGWLARAERMVKNTFMPTDVDPEAFGHQHKELAA.

The signal sequence occupies residues 1–25 (MGFWKLSPFLAIGLLVMYQAGILQA). A propeptide spanning residues 26-81 (APFRSALENPLESATLTEDEICVLLTAVVKDYVQMKARELQQEQETEGSSLTAQKS) is cleaved from the precursor. Positions 65–85 (LQQEQETEGSSLTAQKSSCKD) are disordered. Residues 72 to 81 (EGSSLTAQKS) are compositionally biased toward polar residues. Cysteines 83 and 88 form a disulfide.

Belongs to the calcitonin family.

It localises to the secreted. The protein is Calcitonin receptor-stimulating peptide 2 (CRSP2) of Canis lupus familiaris (Dog).